A 464-amino-acid chain; its full sequence is UDP-N-acetylmuramate--L-alanine ligase (464 aa).

117-123 (GTHGKTT) provides a ligand contact to ATP.

It belongs to the MurCDEF family.

Its subcellular location is the cytoplasm. It carries out the reaction UDP-N-acetyl-alpha-D-muramate + L-alanine + ATP = UDP-N-acetyl-alpha-D-muramoyl-L-alanine + ADP + phosphate + H(+). It functions in the pathway cell wall biogenesis; peptidoglycan biosynthesis. Cell wall formation. In Streptomyces avermitilis (strain ATCC 31267 / DSM 46492 / JCM 5070 / NBRC 14893 / NCIMB 12804 / NRRL 8165 / MA-4680), this protein is UDP-N-acetylmuramate--L-alanine ligase.